The sequence spans 259 residues: 5'-nucleotidase SurE 1 (259 aa).

A divalent metal cation contacts are provided by aspartate 16, aspartate 17, serine 48, and asparagine 101.

The protein belongs to the SurE nucleotidase family. A divalent metal cation serves as cofactor.

The protein localises to the cytoplasm. The enzyme catalyses a ribonucleoside 5'-phosphate + H2O = a ribonucleoside + phosphate. Its function is as follows. Nucleotidase that shows phosphatase activity on nucleoside 5'-monophosphates. This chain is 5'-nucleotidase SurE 1, found in Burkholderia lata (strain ATCC 17760 / DSM 23089 / LMG 22485 / NCIMB 9086 / R18194 / 383).